The following is a 227-amino-acid chain: MICOS complex subunit Mic19 (227 aa).

A lipid anchor (N-myristoyl glycine) is attached at G2. A Phosphoserine modification is found at S29. The disordered stretch occupies residues 32–57 (VIDRMKESSPSGSKSQRYSSVYGASV). Residues 39–50 (SSPSGSKSQRYS) are compositionally biased toward polar residues. A Phosphotyrosine modification is found at Y49. A phosphoserine mark is found at S50, S51, S56, and S58. Residues 73–92 (EQAKKESEHQRRLKQARDLE) form a disordered region. N6-acetyllysine is present on K142. The CHCH domain occupies 180 to 222 (HPVCADLQTKILQCYRQNTQQTLSCSALASQYMHCVNHAKQSM). Short sequence motifs (cx9C motif) lie at residues 183–193 (CADLQTKILQC) and 204–214 (CSALASQYMHC). Intrachain disulfides connect C183–C214 and C193–C204.

Belongs to the MICOS complex subunit Mic19 family. Metazoan Mic19 subfamily. In terms of assembly, component of the mitochondrial contact site and cristae organizing system (MICOS) complex, composed of at least MICOS10/MIC10, CHCHD3/MIC19, CHCHD6/MIC25, APOOL/MIC27, IMMT/MIC60, APOO/MIC23/MIC26 and MICOS13/MIC13. This complex was also known under the names MINOS or MitOS complex. The MICOS complex associates with mitochondrial outer membrane proteins SAMM50, MTX1 and MTX2 (together described as components of the mitochondrial outer membrane sorting assembly machinery (SAM) complex) and DNAJC11, mitochondrial inner membrane protein TMEM11 and with HSPA9. The MICOS and SAM complexes together with DNAJC11 are part of a large protein complex spanning both membranes termed the mitochondrial intermembrane space bridging (MIB) complex. Interacts with HSPA1A/HSPA1B and OPA1, preferentially with the soluble OPA1 form.

It localises to the mitochondrion inner membrane. The protein localises to the cytoplasm. It is found in the nucleus. Its subcellular location is the mitochondrion. Its function is as follows. Component of the MICOS complex, a large protein complex of the mitochondrial inner membrane that plays crucial roles in the maintenance of crista junctions, inner membrane architecture, and formation of contact sites to the outer membrane. Has also been shown to function as a transcription factor which binds to the BAG1 promoter and represses BAG1 transcription. Plays an important role in the maintenance of the MICOS complex stability and the mitochondrial cristae morphology. This Mus musculus (Mouse) protein is MICOS complex subunit Mic19 (Chchd3).